Consider the following 234-residue polypeptide: Orotidine 5'-phosphate decarboxylase (234 aa).

Substrate contacts are provided by residues aspartate 11, lysine 33, 60 to 69, threonine 120, arginine 181, glutamine 190, glycine 210, and arginine 211; that span reads DLKFHDIPNT. The Proton donor role is filled by lysine 62.

The protein belongs to the OMP decarboxylase family. Type 1 subfamily. Homodimer.

It carries out the reaction orotidine 5'-phosphate + H(+) = UMP + CO2. Its pathway is pyrimidine metabolism; UMP biosynthesis via de novo pathway; UMP from orotate: step 2/2. Functionally, catalyzes the decarboxylation of orotidine 5'-monophosphate (OMP) to uridine 5'-monophosphate (UMP). In Aliivibrio salmonicida (strain LFI1238) (Vibrio salmonicida (strain LFI1238)), this protein is Orotidine 5'-phosphate decarboxylase.